The chain runs to 337 residues: Protein RecA (337 aa).

66–73 is an ATP binding site; it reads GPESSGKT.

This sequence belongs to the RecA family.

It is found in the cytoplasm. In terms of biological role, can catalyze the hydrolysis of ATP in the presence of single-stranded DNA, the ATP-dependent uptake of single-stranded DNA by duplex DNA, and the ATP-dependent hybridization of homologous single-stranded DNAs. It interacts with LexA causing its activation and leading to its autocatalytic cleavage. The chain is Protein RecA from Mesomycoplasma hyopneumoniae (strain J / ATCC 25934 / NCTC 10110) (Mycoplasma hyopneumoniae).